We begin with the raw amino-acid sequence, 407 residues long: Elongation factor Tu (407 aa).

Residues Lys10–Glu217 form the tr-type G domain. A G1 region spans residues Gly19 to Thr26. Gly19 to Thr26 contributes to the GTP binding site. Thr26 lines the Mg(2+) pocket. The segment at Gly60–Ala64 is G2. Positions Asp81–Gly84 are G3. GTP-binding positions include Asp81–His85 and Asn136–Asp139. A G4 region spans residues Asn136–Asp139. A G5 region spans residues Ser184–Leu186.

Belongs to the TRAFAC class translation factor GTPase superfamily. Classic translation factor GTPase family. EF-Tu/EF-1A subfamily. As to quaternary structure, monomer.

It localises to the cytoplasm. It carries out the reaction GTP + H2O = GDP + phosphate + H(+). Functionally, GTP hydrolase that promotes the GTP-dependent binding of aminoacyl-tRNA to the A-site of ribosomes during protein biosynthesis. The polypeptide is Elongation factor Tu (Teredinibacter turnerae (strain ATCC 39867 / T7901)).